The following is a 429-amino-acid chain: Chaperone SurA (429 aa).

Positions M1–A18 are cleaved as a signal peptide. PpiC domains follow at residues N170–A271 and I281–A380.

Its subcellular location is the periplasm. The enzyme catalyses [protein]-peptidylproline (omega=180) = [protein]-peptidylproline (omega=0). Functionally, chaperone involved in the correct folding and assembly of outer membrane proteins. Recognizes specific patterns of aromatic residues and the orientation of their side chains, which are found more frequently in integral outer membrane proteins. May act in both early periplasmic and late outer membrane-associated steps of protein maturation. The polypeptide is Chaperone SurA (Legionella pneumophila (strain Paris)).